We begin with the raw amino-acid sequence, 331 residues long: Phospho-N-acetylmuramoyl-pentapeptide-transferase (331 aa).

The next 9 helical transmembrane spans lie at 7–27 (IIYT…LTIP), 54–74 (TIGG…SGLI), 78–98 (LWIA…DDFI), 106–126 (LGLR…ILAI), 133–153 (IMGT…AGFT), 154–174 (ITQT…VVVA), 195–215 (IIAA…LAIF), 249–269 (AIAT…VGGI), and 311–331 (VVIV…LALS).

The protein belongs to the glycosyltransferase 4 family. MraY subfamily. Requires Mg(2+) as cofactor.

The protein localises to the cell membrane. The enzyme catalyses UDP-N-acetyl-alpha-D-muramoyl-L-alanyl-gamma-D-glutamyl-meso-2,6-diaminopimeloyl-D-alanyl-D-alanine + di-trans,octa-cis-undecaprenyl phosphate = di-trans,octa-cis-undecaprenyl diphospho-N-acetyl-alpha-D-muramoyl-L-alanyl-D-glutamyl-meso-2,6-diaminopimeloyl-D-alanyl-D-alanine + UMP. It participates in cell wall biogenesis; peptidoglycan biosynthesis. Catalyzes the initial step of the lipid cycle reactions in the biosynthesis of the cell wall peptidoglycan: transfers peptidoglycan precursor phospho-MurNAc-pentapeptide from UDP-MurNAc-pentapeptide onto the lipid carrier undecaprenyl phosphate, yielding undecaprenyl-pyrophosphoryl-MurNAc-pentapeptide, known as lipid I. This Alkaliphilus metalliredigens (strain QYMF) protein is Phospho-N-acetylmuramoyl-pentapeptide-transferase.